We begin with the raw amino-acid sequence, 369 residues long: 3,4-dihydroxy-2-butanone 4-phosphate synthase (369 aa).

Residues 1 to 201 (MAFDRIEDII…IADLIHYRLS (201 aa)) are DHBP synthase. D-ribulose 5-phosphate contacts are provided by residues 27-28 (RE), Asp-32, 140-144 (RAGHT), and Glu-164. Glu-28 is a Mg(2+) binding site. His-143 is a binding site for Mg(2+). The tract at residues 202–369 (TEHTIVRIGE…EVIESIPFPG (168 aa)) is GTP cyclohydrolase II-like.

The protein in the N-terminal section; belongs to the DHBP synthase family. It in the C-terminal section; belongs to the GTP cyclohydrolase II family. It depends on Mg(2+) as a cofactor. Mn(2+) serves as cofactor.

The enzyme catalyses D-ribulose 5-phosphate = (2S)-2-hydroxy-3-oxobutyl phosphate + formate + H(+). Its pathway is cofactor biosynthesis; riboflavin biosynthesis; 2-hydroxy-3-oxobutyl phosphate from D-ribulose 5-phosphate: step 1/1. Its function is as follows. Catalyzes the conversion of D-ribulose 5-phosphate to formate and 3,4-dihydroxy-2-butanone 4-phosphate. The sequence is that of 3,4-dihydroxy-2-butanone 4-phosphate synthase (ribB) from Pseudomonas syringae pv. tomato (strain ATCC BAA-871 / DC3000).